The sequence spans 236 residues: Eukaryotic translation initiation factor 3 subunit J (236 aa).

Disordered stretches follow at residues 1-88 (MADD…LANM) and 188-236 (SEKQ…DDFM). Positions 28-46 (GEDDDEDVKESWEDEEEKK) are enriched in acidic residues. Composition is skewed to basic and acidic residues over residues 47 to 58 (DEEKPTKTEAPV), 68 to 88 (AKLE…LANM), and 188 to 197 (SEKQKMEKAN). Coiled coils occupy residues 61–112 (KPNK…LKSA) and 174–209 (ADIK…KGKV). The span at 201–210 (SAAKAKGKVS) shows a compositional bias: basic residues.

The protein belongs to the eIF-3 subunit J family. Component of the eukaryotic translation initiation factor 3 (eIF-3) complex. The eIF-3 complex interacts with pix.

Its subcellular location is the cytoplasm. Component of the eukaryotic translation initiation factor 3 (eIF-3) complex, which is involved in protein synthesis of a specialized repertoire of mRNAs and, together with other initiation factors, stimulates binding of mRNA and methionyl-tRNAi to the 40S ribosome. The eIF-3 complex specifically targets and initiates translation of a subset of mRNAs involved in cell proliferation. The sequence is that of Eukaryotic translation initiation factor 3 subunit J from Drosophila virilis (Fruit fly).